The primary structure comprises 380 residues: Pectin lyase (380 aa).

Positions 1–20 (MRSASILSAALAAFAPLASA) are cleaved as a signal peptide. N130 is a glycosylation site (N-linked (GlcNAc...) asparagine).

It belongs to the polysaccharide lyase 1 family.

The protein resides in the secreted. The catalysed reaction is Eliminative cleavage of (1-&gt;4)-alpha-D-galacturonan methyl ester to give oligosaccharides with 4-deoxy-6-O-methyl-alpha-D-galact-4-enuronosyl groups at their non-reducing ends.. The sequence is that of Pectin lyase (PNLA) from Colletotrichum gloeosporioides (Anthracnose fungus).